Consider the following 1912-residue polypeptide: Receptor-type tyrosine-protein phosphatase delta (1912 aa).

The signal sequence occupies residues methionine 1–alanine 20. At glutamate 21–glycine 1266 the chain is on the extracellular side. 2 consecutive Ig-like C2-type domains span residues proline 24 to threonine 114 and proline 126 to tyrosine 224. Cystine bridges form between cysteine 45–cysteine 98 and cysteine 147–cysteine 207. A mini-exon peptide A9; sufficient for interaction with IL1RAPL1 region spans residues glutamate 181–arginine 189. Residues glutamate 227–glutamate 230 form a mini-exon peptide B; required for interaction with SLITRK2 and in the function in pre-synaptic differentiation; Acts as an adjustable linker to control relative positions and orientations of the PTPRD second and third immunoglobilin domains for their simultaneous interactions with the first immunoglobilin domain of IL1RAPL1 and IL1RAP; Modulates affinity for IL1RAPL1 and IL1RAP region. Positions proline 236–threonine 318 constitute an Ig-like C2-type 3 domain. 2 N-linked (GlcNAc...) asparagine glycosylation sites follow: asparagine 254 and asparagine 299. Cysteine 257 and cysteine 302 are oxidised to a cystine. 8 Fibronectin type-III domains span residues proline 325–glutamine 415, alanine 420–proline 516, glutamine 518–serine 607, proline 612–aspartate 709, proline 714–alanine 822, valine 823–glutamate 916, phenylalanine 921–valine 1016, and phenylalanine 1020–aspartate 1106. Residues asparagine 724 and asparagine 832 are each glycosylated (N-linked (GlcNAc...) asparagine). A helical transmembrane segment spans residues leucine 1267–isoleucine 1287. Residues leucine 1288 to threonine 1912 are Cytoplasmic-facing. Residues glutamate 1298–valine 1319 form a disordered region. The segment covering valine 1310–valine 1319 has biased composition (basic and acidic residues). 2 Tyrosine-protein phosphatase domains span residues phenylalanine 1357 to alanine 1612 and methionine 1644 to tyrosine 1903. Substrate is bound by residues aspartate 1521, cysteine 1553–arginine 1559, and glutamine 1597. Cysteine 1553 acts as the Phosphocysteine intermediate in catalysis. The Phosphocysteine intermediate role is filled by cysteine 1844.

Belongs to the protein-tyrosine phosphatase family. Receptor class 2A subfamily. In terms of assembly, interacts with PPFIA1, PPFIA2 and PPFIA3. Interacts (via extracellular domain) with SLITRK4 (via LRR 1 and 2 repeats). Interacts with SLITRK2; induces presynaptic differentiation. Interacts (via the second immunoglobilin domain) with IL1RAPL1 (via the first immunoglobilin domain); induces pre- and postsynaptic differentiation of neurons and synapse formation. Isoform G, isoform H, isoform I, isoform J, and isoform K do not interact with IL1RAPL1. Interacts (via the third immunoglobilin domain) with IL1RAP (via the first immunoglobilin domain); induces pre- and postsynaptic differentiation of neurons. A cleavage occurs, separating the extracellular domain from the transmembrane segment. This process called 'ectodomain shedding' is thought to be involved in receptor desensitization, signal transduction and/or membrane localization. As to expression, brain, kidney, heart, and some B-cell lines.

It is found in the membrane. The enzyme catalyses O-phospho-L-tyrosyl-[protein] + H2O = L-tyrosyl-[protein] + phosphate. In terms of biological role, can bidirectionally induce pre- and post-synaptic differentiation of neurons by mediating interaction with IL1RAP and IL1RAPL1 trans-synaptically. Involved in pre-synaptic differentiation through interaction with SLITRK2. In Mus musculus (Mouse), this protein is Receptor-type tyrosine-protein phosphatase delta (Ptprd).